Reading from the N-terminus, the 881-residue chain is Alanine--tRNA ligase (881 aa).

His564, His568, Cys666, and His670 together coordinate Zn(2+).

The protein belongs to the class-II aminoacyl-tRNA synthetase family. Requires Zn(2+) as cofactor.

It localises to the cytoplasm. It carries out the reaction tRNA(Ala) + L-alanine + ATP = L-alanyl-tRNA(Ala) + AMP + diphosphate. Its function is as follows. Catalyzes the attachment of alanine to tRNA(Ala) in a two-step reaction: alanine is first activated by ATP to form Ala-AMP and then transferred to the acceptor end of tRNA(Ala). Also edits incorrectly charged Ser-tRNA(Ala) and Gly-tRNA(Ala) via its editing domain. The polypeptide is Alanine--tRNA ligase (Caldicellulosiruptor saccharolyticus (strain ATCC 43494 / DSM 8903 / Tp8T 6331)).